The primary structure comprises 229 residues: DNA mismatch repair protein MutH (229 aa).

This sequence belongs to the MutH family.

It localises to the cytoplasm. In terms of biological role, sequence-specific endonuclease that cleaves unmethylated GATC sequences. It is involved in DNA mismatch repair. The polypeptide is DNA mismatch repair protein MutH (Escherichia coli (strain SMS-3-5 / SECEC)).